Consider the following 342-residue polypeptide: MSVEHSPVDPSAEPPEKAEEAALRPGALAEFGGQQRVADQLGLVLAASKSRGTTPDHVLLSGPPGLGKTTLAMIIASEMSAPIRISSGPAIQHAGDLAAILSSLVPGEVFFLDEIHRMSKPAEEMLYLAMEDFRVDVVVGKGPGATAIPIEIPPFTLVGATTRAGLLPGPLRDRFGFTAQLDYYEVADLERIVTRSAGVIGVELAEGAAHTIASRSRGTPRIANRLLRRVRDWADVHHESPVTPQGAETALDLYEVDPLGLDRLDRAVLHAVCLKFGGGPVGLSTLAISVGEEPQTVEEVAEPFLVRLGFLMRTPRGRVPTDRAWRHLGLEPPPDSSGEGLF.

The interval 1–21 is disordered; that stretch reads MSVEHSPVDPSAEPPEKAEEA. The interval 1–184 is large ATPase domain (RuvB-L); that stretch reads MSVEHSPVDP…FGFTAQLDYY (184 aa). ATP is bound by residues L23, R24, G65, K68, T69, T70, 131-133, R174, Y184, and R221; that span reads EDF. T69 serves as a coordination point for Mg(2+). Residues 185–255 form a small ATPAse domain (RuvB-S) region; sequence EVADLERIVT…GAETALDLYE (71 aa). Positions 258-342 are head domain (RuvB-H); the sequence is PLGLDRLDRA…PPDSSGEGLF (85 aa). Residues R313 and R318 each coordinate DNA.

It belongs to the RuvB family. In terms of assembly, homohexamer. Forms an RuvA(8)-RuvB(12)-Holliday junction (HJ) complex. HJ DNA is sandwiched between 2 RuvA tetramers; dsDNA enters through RuvA and exits via RuvB. An RuvB hexamer assembles on each DNA strand where it exits the tetramer. Each RuvB hexamer is contacted by two RuvA subunits (via domain III) on 2 adjacent RuvB subunits; this complex drives branch migration. In the full resolvosome a probable DNA-RuvA(4)-RuvB(12)-RuvC(2) complex forms which resolves the HJ.

The protein localises to the cytoplasm. It carries out the reaction ATP + H2O = ADP + phosphate + H(+). The RuvA-RuvB-RuvC complex processes Holliday junction (HJ) DNA during genetic recombination and DNA repair, while the RuvA-RuvB complex plays an important role in the rescue of blocked DNA replication forks via replication fork reversal (RFR). RuvA specifically binds to HJ cruciform DNA, conferring on it an open structure. The RuvB hexamer acts as an ATP-dependent pump, pulling dsDNA into and through the RuvAB complex. RuvB forms 2 homohexamers on either side of HJ DNA bound by 1 or 2 RuvA tetramers; 4 subunits per hexamer contact DNA at a time. Coordinated motions by a converter formed by DNA-disengaged RuvB subunits stimulates ATP hydrolysis and nucleotide exchange. Immobilization of the converter enables RuvB to convert the ATP-contained energy into a lever motion, pulling 2 nucleotides of DNA out of the RuvA tetramer per ATP hydrolyzed, thus driving DNA branch migration. The RuvB motors rotate together with the DNA substrate, which together with the progressing nucleotide cycle form the mechanistic basis for DNA recombination by continuous HJ branch migration. Branch migration allows RuvC to scan DNA until it finds its consensus sequence, where it cleaves and resolves cruciform DNA. This is Holliday junction branch migration complex subunit RuvB from Cutibacterium acnes (strain DSM 16379 / KPA171202) (Propionibacterium acnes).